The sequence spans 393 residues: Cytochrome b (393 aa).

Over Met-1 to Ser-33 the chain is Mitochondrial matrix. The helical transmembrane segment at Tyr-34–Ala-57 threads the bilayer. Topologically, residues Met-58 to Gly-80 are mitochondrial intermembrane. A helical transmembrane segment spans residues Gly-81–Tyr-108. Residues His-88 and His-102 each coordinate heme b. Residues Tyr-109–Arg-116 lie on the Mitochondrial matrix side of the membrane. The helical transmembrane segment at Glu-117 to Pro-141 threads the bilayer. The Mitochondrial intermembrane portion of the chain corresponds to Trp-142–Asp-178. Residues Asn-179 to Tyr-210 traverse the membrane as a helical segment. His-189 and His-203 together coordinate heme b. His-208 provides a ligand contact to a ubiquinone. Over Gly-211–Pro-229 the chain is Mitochondrial matrix. The helical transmembrane segment at Tyr-230–Tyr-252 threads the bilayer. At Ala-253–Asp-293 the chain is on the mitochondrial intermembrane side. A helical membrane pass occupies residues Lys-294–Phe-314. Residues Lys-315–Arg-325 lie on the Mitochondrial matrix side of the membrane. Residues Pro-326 to Gly-346 traverse the membrane as a helical segment. Residues Cys-347–Pro-353 are Mitochondrial intermembrane-facing. A helical membrane pass occupies residues Phe-354–Ala-370. Over Ile-371–Thr-393 the chain is Mitochondrial matrix.

The protein belongs to the cytochrome b family. In terms of assembly, component of the ubiquinol-cytochrome c oxidoreductase (cytochrome b-c1 complex, complex III, CIII), a multisubunit enzyme composed of 10 subunits. The complex is composed of 3 respiratory subunits cytochrome b (MT-CYB), cytochrome c1 (CYC1-1 or CYC1-2) and Rieske protein (UCR1-1 or UCR1-2), 2 core protein subunits MPPalpha1 (or MPPalpha2) and MPPB, and 5 low-molecular weight protein subunits QCR7-1 (or QCR7-2), UCRQ-1 (or UCRQ-2), QCR9, UCRY and probably QCR6-1 (or QCR6-2). The complex exists as an obligatory dimer and forms supercomplexes (SCs) in the inner mitochondrial membrane with NADH-ubiquinone oxidoreductase (complex I, CI), resulting in different assemblies (supercomplexes SCI(1)III(2) and SCI(2)III(4)). Heme b serves as cofactor.

Its subcellular location is the mitochondrion inner membrane. Component of the ubiquinol-cytochrome c oxidoreductase, a multisubunit transmembrane complex that is part of the mitochondrial electron transport chain which drives oxidative phosphorylation. The respiratory chain contains 3 multisubunit complexes succinate dehydrogenase (complex II, CII), ubiquinol-cytochrome c oxidoreductase (cytochrome b-c1 complex, complex III, CIII) and cytochrome c oxidase (complex IV, CIV), that cooperate to transfer electrons derived from NADH and succinate to molecular oxygen, creating an electrochemical gradient over the inner membrane that drives transmembrane transport and the ATP synthase. The cytochrome b-c1 complex catalyzes electron transfer from ubiquinol to cytochrome c, linking this redox reaction to translocation of protons across the mitochondrial inner membrane, with protons being carried across the membrane as hydrogens on the quinol. In the process called Q cycle, 2 protons are consumed from the matrix, 4 protons are released into the intermembrane space and 2 electrons are passed to cytochrome c. Cytochrome b is a catalytic core subunit containing 2 b-type hemes BL and BH topographically segregated in the quinone reduction (Qi) and quinol oxidation (Q0) sites on opposite sides of the membrane. The protein is Cytochrome b (MT-CYB) of Arabidopsis thaliana (Mouse-ear cress).